The chain runs to 692 residues: Transforming growth factor beta activator LRRC33 (692 aa).

An N-terminal signal peptide occupies residues 1 to 24 (MEFLPLWLCLGFHFLIVEWRSGRG). At 25 to 650 (TATAASQGGC…CKWGQVDTGL (626 aa)) the chain is on the extracellular side. One can recognise an LRRNT domain in the interval 29–56 (ASQGGCKVVDRVADCRSLNLASVPSGLP). 10 LRR repeats span residues 58 to 79 (HSRM…SLQA), 82 to 103 (RLED…AFHE), 106 to 127 (HLQN…SATA), 133 to 155 (RLRR…MLQN), 158 to 179 (SLEV…VFEG), 182 to 203 (RLVE…AFDG), 206 to 227 (ELRR…SLTQ), 228 to 239 (LRFLNVSYNILE), 251 to 272 (ELEI…PQCG), and 273 to 294 (KLHT…YNTS). Asparagine 74 is a glycosylation site (N-linked (GlcNAc...) asparagine). The N-linked (GlcNAc...) asparagine glycan is linked to asparagine 155. A glycan (N-linked (GlcNAc...) asparagine) is linked at asparagine 232. 3 N-linked (GlcNAc...) asparagine glycosylation sites follow: asparagine 292, asparagine 309, and asparagine 312. 11 LRR repeats span residues 329-350 (ALRF…FLKK), 353-374 (SLSH…EHEP), 377-398 (ALTE…PGLT), 403-424 (NLRV…LFHS), 427-448 (SITT…VPLD), 463-484 (SLRS…PFQG), 486-507 (SLTH…SPLS), 512-533 (TLQV…MDFS), 537-558 (NLRE…KGSS), 559-580 (ALQT…VVSE), and 585-605 (GLQT…EGWG). An N-linked (GlcNAc...) asparagine glycan is attached at asparagine 408. Asparagine 500 carries an N-linked (GlcNAc...) asparagine glycan. The region spanning 606–643 (ALQHFKTIADLSMVTCNLSSKIIRVVELPEGIPQDCKW) is the LRRCT domain. Asparagine 622 carries an N-linked (GlcNAc...) asparagine glycan. A helical membrane pass occupies residues 651-671 (FYLVLILPSCLTLLVASTVIF). Over 672–692 (LTFKKPLLQVIKSRCHWSSIY) the chain is Cytoplasmic.

It belongs to the LRRC32/LRRC33 family. In terms of assembly, interacts (via LRR repeats) with TLR2, TLR3, TLR4, TLR9 and probably other Toll-like receptors. Interacts with CYBB/NOX2; the interaction is direct. Interacts with TGFB1; associates via disulfide bonds with the Latency-associated peptide chain (LAP) regulatory chain of TGFB1, leading to regulate activation of TGF-beta-1.

It localises to the cell membrane. The protein resides in the endoplasmic reticulum membrane. Its function is as follows. Key regulator of transforming growth factor beta-1 (TGFB1) specifically required for microglia function in the nervous system. Required for activation of latent TGF-beta-1 in macrophages and microglia: associates specifically via disulfide bonds with the Latency-associated peptide (LAP), which is the regulatory chain of TGFB1, and regulates integrin-dependent activation of TGF-beta-1. TGF-beta-1 activation mediated by LRRC33/NRROS is highly localized: there is little spreading of TGF-beta-1 activated from one microglial cell to neighboring microglia, suggesting the existence of localized and selective activation of TGF-beta-1 by LRRC33/NRROS. Indirectly plays a role in Toll-like receptor (TLR) signaling: ability to inhibit TLR-mediated NF-kappa-B activation and cytokine production is probably a consequence of its role in TGF-beta-1 signaling. The protein is Transforming growth factor beta activator LRRC33 of Rattus norvegicus (Rat).